A 116-amino-acid polypeptide reads, in one-letter code: Galanin-like peptide (116 aa).

A signal peptide spans 1-24; it reads MAPPSVPLVLLLVLLLSLAETPAS. A propeptide spanning residues 87–116 is cleaved from the precursor; that stretch reads NVMETFAKPEIGDLGMLSMKIPKEEDVLKS.

The protein belongs to the galanin family. As to expression, isoform 2 is found in ganglia of ganglioneuroma and ganglioneuroblastoma, as well as in differentiated tumor cells of neuroblastoma tissues. Not found in undifferentiated neuroblasts. Isoform 2 is found in the skin, in pericytes covering microvascular arterioles and venules on their abluminal surfaces. In larger vessels, isoform 2 is expressed in layers of smooth muscle cells. Isoform 2 is not detected in endothelial cells.

Its subcellular location is the secreted. Functionally, hypothalamic neuropeptide which binds to the G-protein-coupled galanin receptors (GALR1, GALR2 and GALR3). Involved in a large number of putative physiological functions in CNS homeostatic processes, including the regulation of gonadotropin-releasing hormone secretion. Exhibits potent and dose-dependent vasoconstrictor and anti-edema activity in the cutaneous microvasculature, a physiologic effects which does not appear to be mediated via GALR1 or GALR2. Exhibits antimicrobial activity against Gram-negative bacterias, inducing bacterial membrane blebbing. The polypeptide is Galanin-like peptide (GALP) (Homo sapiens (Human)).